Here is a 777-residue protein sequence, read N- to C-terminus: Subtilisin-like protease SBT3.7 (777 aa).

The first 22 residues, 1–22 (MRNHRTSIFVVLSLVIILNGQS), serve as a signal peptide directing secretion. A propeptide spans 23-113 (GFLPRAGAES…VIPDRFYKPA (91 aa)) (activation peptide). Residues 34 to 111 (VHIVYLGEKQ…VHVIPDRFYK (78 aa)) form the Inhibitor I9 domain. One can recognise a Peptidase S8 domain in the interval 117-624 (TWDYLGLSPT…GGLVNPEKAT (508 aa)). Asn-133 carries an N-linked (GlcNAc...) asparagine glycan. Catalysis depends on Asp-147, which acts as the Charge relay system. N-linked (GlcNAc...) asparagine glycans are attached at residues Asn-180 and Asn-206. Catalysis depends on His-222, which acts as the Charge relay system. N-linked (GlcNAc...) asparagine glycans are attached at residues Asn-237, Asn-397, Asn-412, and Asn-540. Residues 386 to 481 (SLVYPENPGN…ELGTYILFYI (96 aa)) enclose the PA domain. Ser-555 acts as the Charge relay system in catalysis. Residues Asn-647, Asn-723, and Asn-758 are each glycosylated (N-linked (GlcNAc...) asparagine).

This sequence belongs to the peptidase S8 family.

Its subcellular location is the secreted. The chain is Subtilisin-like protease SBT3.7 from Arabidopsis thaliana (Mouse-ear cress).